Consider the following 290-residue polypeptide: 4-hydroxybenzoate octaprenyltransferase (290 aa).

6 helical membrane-spanning segments follow: residues 33–53, 99–119, 141–161, 213–233, 234–254, and 268–288; these read LWALWVASPGVPPLWILAVFV, LFVILVLLSFLLVLTLNVKTI, LPQVVLGAAFGWSIPMAFCAV, LIIGLLQIAVLALLGTVGWLN, GLGAFYYAGLAGAGALFIWQQ, and AFLNNNYVGLLVFIGLALSYL.

It belongs to the UbiA prenyltransferase family. Mg(2+) is required as a cofactor.

It is found in the cell inner membrane. It carries out the reaction all-trans-octaprenyl diphosphate + 4-hydroxybenzoate = 4-hydroxy-3-(all-trans-octaprenyl)benzoate + diphosphate. The protein operates within cofactor biosynthesis; ubiquinone biosynthesis. Functionally, catalyzes the prenylation of para-hydroxybenzoate (PHB) with an all-trans polyprenyl group. Mediates the second step in the final reaction sequence of ubiquinone-8 (UQ-8) biosynthesis, which is the condensation of the polyisoprenoid side chain with PHB, generating the first membrane-bound Q intermediate 3-octaprenyl-4-hydroxybenzoate. In Cronobacter sakazakii (strain ATCC BAA-894) (Enterobacter sakazakii), this protein is 4-hydroxybenzoate octaprenyltransferase.